We begin with the raw amino-acid sequence, 175 residues long: MPVSLTYLGIDPGLTATGWGVIGISGSRLTHIANGTITSNARLSLAERLVQIEAGLVQVIHEHAPDAAAVEQAFVARDASAALKLGQARAIALLVSARAGLAVAEYAPNHVKKSVVGAGHADKSQIRLMVEMLLPGAKAGSEHAADALALAICHAHSGSANERIAAALLRAGAGR.

Catalysis depends on residues aspartate 11, glutamate 71, and histidine 143. Residues aspartate 11, glutamate 71, and histidine 143 each coordinate Mg(2+).

Belongs to the RuvC family. Homodimer which binds Holliday junction (HJ) DNA. The HJ becomes 2-fold symmetrical on binding to RuvC with unstacked arms; it has a different conformation from HJ DNA in complex with RuvA. In the full resolvosome a probable DNA-RuvA(4)-RuvB(12)-RuvC(2) complex forms which resolves the HJ. Requires Mg(2+) as cofactor.

It localises to the cytoplasm. It carries out the reaction Endonucleolytic cleavage at a junction such as a reciprocal single-stranded crossover between two homologous DNA duplexes (Holliday junction).. Its function is as follows. The RuvA-RuvB-RuvC complex processes Holliday junction (HJ) DNA during genetic recombination and DNA repair. Endonuclease that resolves HJ intermediates. Cleaves cruciform DNA by making single-stranded nicks across the HJ at symmetrical positions within the homologous arms, yielding a 5'-phosphate and a 3'-hydroxyl group; requires a central core of homology in the junction. The consensus cleavage sequence is 5'-(A/T)TT(C/G)-3'. Cleavage occurs on the 3'-side of the TT dinucleotide at the point of strand exchange. HJ branch migration catalyzed by RuvA-RuvB allows RuvC to scan DNA until it finds its consensus sequence, where it cleaves and resolves the cruciform DNA. The chain is Crossover junction endodeoxyribonuclease RuvC from Parvibaculum lavamentivorans (strain DS-1 / DSM 13023 / NCIMB 13966).